The sequence spans 609 residues: NADH-ubiquinone oxidoreductase chain 5 (609 aa).

A run of 16 helical transmembrane segments spans residues V3–V23, A46–I66, M90–Y110, P115–V135, L140–W160, A174–I194, L216–L236, T244–I264, M276–L296, I304–N323, A328–I350, V368–F388, W410–F432, L460–T480, M485–L505, and G585–I605.

The protein belongs to the complex I subunit 5 family.

The protein localises to the mitochondrion inner membrane. It catalyses the reaction a ubiquinone + NADH + 5 H(+)(in) = a ubiquinol + NAD(+) + 4 H(+)(out). Its function is as follows. Core subunit of the mitochondrial membrane respiratory chain NADH dehydrogenase (Complex I) that is believed to belong to the minimal assembly required for catalysis. Complex I functions in the transfer of electrons from NADH to the respiratory chain. The immediate electron acceptor for the enzyme is believed to be ubiquinone. This chain is NADH-ubiquinone oxidoreductase chain 5 (MT-ND5), found in Phoca vitulina (Harbor seal).